The sequence spans 338 residues: MADKAPFDTDISTMTRFVMEEGRKAGGTGEMTQLLNSLCTAVKAISTAVRKAGIAHLYGIAGSTNVTGDQVKKLDVLSNDLVMNMLKSSFATCVLVSEEDKNAIIVEPEKRGKYVVCFDPLDGSSNIDCLVSIGTIFGIYRKKSTDEPSTKDALQPGRNLVAAGYALYGSATMLVLAGGSGVNSFMLDPAIGEFILVDKNVKIKKKGNIYSLNEGYAKDFDPAVTEYIQKKKFPPDNSSPYGARYVGSMVADVHRTLVYGGIFLYPANKKSPDGKLRLLYECNPMAFIMEKAGGMATTGKEAILDIVPTDIHQRAPVILGSPDDVQEFLEIYKKHAVK.

Ala2 bears the N-acetylalanine mark. AMP contacts are provided by residues 18–22 (VMEEG) and 28–32 (TGEMT). Mg(2+)-binding residues include Asp69 and Glu98. AMP is bound at residue 113–114 (KY). Asp119, Leu121, and Asp122 together coordinate Mg(2+). 122 to 125 (DGSS) serves as a coordination point for substrate. Position 141 (Arg141) interacts with AMP. Lys151 bears the N6-succinyllysine mark. Substrate-binding positions include 213–216 (NEGY), 244–249 (RYVGSM), Tyr265, and 275–277 (KLR). Tyr216, Tyr245, and Tyr265 each carry phosphotyrosine. Glu281 lines the Mg(2+) pocket.

It belongs to the FBPase class 1 family. As to quaternary structure, homotetramer. Requires Mg(2+) as cofactor.

The catalysed reaction is beta-D-fructose 1,6-bisphosphate + H2O = beta-D-fructose 6-phosphate + phosphate. Its pathway is carbohydrate biosynthesis; gluconeogenesis. Subject to complex allosteric regulation. The enzyme can assume an active R-state, or an inactive T-state. Intermediate conformations may exist. AMP acts as an allosteric inhibitor. AMP binding affects the turnover of bound substrate and not the affinity for substrate. Fructose 2,6-bisphosphate acts as a competitive inhibitor. Fructose 2,6-bisphosphate and AMP have synergistic effects. Catalyzes the hydrolysis of fructose 1,6-bisphosphate to fructose 6-phosphate in the presence of divalent cations, acting as a rate-limiting enzyme in gluconeogenesis. Plays a role in regulating glucose sensing and insulin secretion of pancreatic beta-cells. Appears to modulate glycerol gluconeogenesis in liver. Important regulator of appetite and adiposity; increased expression of the protein in liver after nutrient excess increases circulating satiety hormones and reduces appetite-stimulating neuropeptides and thus seems to provide a feedback mechanism to limit weight gain. The protein is Fructose-1,6-bisphosphatase 1 (FBP1) of Oryctolagus cuniculus (Rabbit).